Here is a 78-residue protein sequence, read N- to C-terminus: Sec-independent protein translocase protein TatA (78 aa).

Residues 1-21 (MGSLSIWHWIVVLAVVLLLFG) traverse the membrane as a helical segment. The segment at 43–78 (LAEDDEPAKTPAAPPEAPRPLPHQTSSAAEAEKKPV) is disordered. A compositionally biased stretch (pro residues) spans 54–63 (AAPPEAPRPL).

Belongs to the TatA/E family. The Tat system comprises two distinct complexes: a TatABC complex, containing multiple copies of TatA, TatB and TatC subunits, and a separate TatA complex, containing only TatA subunits. Substrates initially bind to the TatABC complex, which probably triggers association of the separate TatA complex to form the active translocon.

It localises to the cell inner membrane. In terms of biological role, part of the twin-arginine translocation (Tat) system that transports large folded proteins containing a characteristic twin-arginine motif in their signal peptide across membranes. TatA could form the protein-conducting channel of the Tat system. This Xanthobacter autotrophicus (strain ATCC BAA-1158 / Py2) protein is Sec-independent protein translocase protein TatA.